We begin with the raw amino-acid sequence, 312 residues long: tRNA pseudouridine synthase B (312 aa).

Aspartate 38 acts as the Nucleophile in catalysis.

The protein belongs to the pseudouridine synthase TruB family. Type 1 subfamily.

The catalysed reaction is uridine(55) in tRNA = pseudouridine(55) in tRNA. In terms of biological role, responsible for synthesis of pseudouridine from uracil-55 in the psi GC loop of transfer RNAs. The polypeptide is tRNA pseudouridine synthase B (Syntrophus aciditrophicus (strain SB)).